The following is a 132-amino-acid chain: Interleukin-13 (132 aa).

A signal peptide spans 1-18 (MALLLTAVIVLICFGGLT). N-linked (GlcNAc...) asparagine glycosylation is found at N38, N49, N57, and N75. Cystine bridges form between C48/C76 and C64/C90.

Belongs to the IL-4/IL-13 family. In terms of assembly, interacts with IL13RA2.

Its subcellular location is the secreted. Functionally, cytokine that plays important roles in allergic inflammation and immune response to parasite infection. Synergizes with IL2 in regulating interferon-gamma synthesis. Stimulates B-cell proliferation, and activation of eosinophils, basophils, and mast cells. Plays an important role in controlling IL33 activity by modulating the production of transmembrane and soluble forms of interleukin-1 receptor-like 1/IL1RL1. Displays the capacity to antagonize Th1-driven proinflammatory immune response and downregulates synthesis of many proinflammatory cytokines including IL1, IL6, IL10, IL12 and TNF-alpha through a mechanism that partially involves suppression of NF-kappa-B. Also functions on nonhematopoietic cells, including endothelial cells where it induces vascular cell adhesion protein 1/VCAM1, which is important in the recruitment of eosinophils. Exerts its biological effects through its receptors which comprises the IL4R chain and the IL13RA1 chain, to activate JAK1 and TYK2, leading to the activation of STAT6. Aside from IL13RA1, another receptor IL13RA2 acts as a high affinity decoy for IL13 and mediates internalization and depletion of extracellular IL13. This Bos taurus (Bovine) protein is Interleukin-13 (IL13).